Consider the following 253-residue polypeptide: uncharacterized protein (253 aa).

In terms of domain architecture, BPL/LPL catalytic spans Ala30–Ala236.

This is an uncharacterized protein from Cupriavidus necator (strain ATCC 17699 / DSM 428 / KCTC 22496 / NCIMB 10442 / H16 / Stanier 337) (Ralstonia eutropha).